Here is a 257-residue protein sequence, read N- to C-terminus: Glucosamine-6-phosphate deaminase (257 aa).

The active-site Proton acceptor; for enolization step is the Asp64. Asn133 serves as the catalytic For ring-opening step. The active-site Proton acceptor; for ring-opening step is His135. Glu140 (for ring-opening step) is an active-site residue.

It belongs to the glucosamine/galactosamine-6-phosphate isomerase family. NagB subfamily.

It carries out the reaction alpha-D-glucosamine 6-phosphate + H2O = beta-D-fructose 6-phosphate + NH4(+). Its pathway is amino-sugar metabolism; N-acetylneuraminate degradation; D-fructose 6-phosphate from N-acetylneuraminate: step 5/5. Functionally, catalyzes the reversible isomerization-deamination of glucosamine 6-phosphate (GlcN6P) to form fructose 6-phosphate (Fru6P) and ammonium ion. This chain is Glucosamine-6-phosphate deaminase, found in Corynebacterium urealyticum (strain ATCC 43042 / DSM 7109).